Reading from the N-terminus, the 688-residue chain is Polyribonucleotide nucleotidyltransferase (688 aa).

Residues D484 and D490 each contribute to the Mg(2+) site. Positions 550–609 (PTTEIFNVAPDKIVEIIGQGGRVIREIVEKFEVKIDLNKPSGEVKIMGNKERVLKTKEFI) constitute a KH domain. The 63-residue stretch at 626–688 (DEVLEAQVKR…NKGKIALDLA (63 aa)) folds into the S1 motif domain.

The protein belongs to the polyribonucleotide nucleotidyltransferase family. Mg(2+) is required as a cofactor.

The protein localises to the cytoplasm. The enzyme catalyses RNA(n+1) + phosphate = RNA(n) + a ribonucleoside 5'-diphosphate. In terms of biological role, involved in mRNA degradation. Catalyzes the phosphorolysis of single-stranded polyribonucleotides processively in the 3'- to 5'-direction. The sequence is that of Polyribonucleotide nucleotidyltransferase from Helicobacter pylori (strain Shi470).